Reading from the N-terminus, the 363-residue chain is Cell division cycle-associated protein 3 (363 aa).

The span at 1–12 shows a compositional bias: polar residues; sequence MGSAESKAQVTP. 4 disordered regions span residues 1–81, 126–152, 191–210, and 231–363; these read MGSA…TPLR, VESQ…KAET, MNDQ…EESP, and ENLN…HSNS. The F-box-like stretch occupies residues 93–152; sequence KQLSEVFVAEDSSTEGGPLGFTGPEATNLERQVVESQTAPPAGEHVNDHEVEPSVEKAET. The segment covering 137 to 152 has biased composition (basic and acidic residues); sequence HVNDHEVEPSVEKAET. The span at 192-210 shows a compositional bias: acidic residues; the sequence is NDQEESPIAETMNDQEESP. Residues 259-285 are compositionally biased toward polar residues; it reads SVVSTESTQATGQQQKTRGKSPRSSGV. The segment covering 296–308 has biased composition (low complexity); that stretch reads LLSSSSGRSPLRI. Residues 311–321 are compositionally biased toward polar residues; that stretch reads EDNSPNTNTQH. The short motif at 353–355 is the KEN box element; the sequence is KEN.

In terms of assembly, interacts with wee1, when wee1 is phosphorylated at 'Ser-38'. Phosphorylated. In terms of processing, ubiquitinated and degraded by the APC/C-Cdh1 complex during G1 phase.

It localises to the cytoplasm. The protein localises to the cytosol. The protein operates within protein modification; protein ubiquitination. Functionally, F-box-like protein which is required for entry into mitosis. Acts by participating in E3 ligase complexes that mediate the ubiquitination and degradation of WEE1 kinase at G2/M phase. This is Cell division cycle-associated protein 3 (cdca3) from Xenopus laevis (African clawed frog).